Consider the following 1005-residue polypeptide: DNA polymerase (1005 aa).

Belongs to the DNA polymerase type-B family. Interacts with OPG148. Component of the Uracil-DNA glycosylase(UDG)-OPG148-polymerase complex; OPG148 and OPG116/UDG form a heterodimeric processivity factor that associates with OPG071 to form the processive polymerase holoenzyme.

The catalysed reaction is DNA(n) + a 2'-deoxyribonucleoside 5'-triphosphate = DNA(n+1) + diphosphate. Its function is as follows. Catalyzes DNA synthesis. Acquires processivity by associating with a heterodimeric processivity factor comprised of the viral OPG148 and OPG116 proteins, thereby forming the DNA polymerase holoenzyme. Displays 3'- to 5' exonuclease activity. Might participate in viral DNA recombination. Does not perform OPG116/D4synthesis across an abasic site. This is DNA polymerase (OPG071) from Variola virus.